The following is a 501-amino-acid chain: MAAAALLLLAAAAAIVVVAMVLRWLLLLGGPAAGRLGKRALMPPGSTGLPLIGETLRLISAYKTPNPEPFIDERVARHGGVFTTHVFGERTVFSADPAFNRLLLAAEGRAVHSSYPSSIATLLGARSLLLTRGAAHKRLHSLTLTRLGRPASPPLLAHIDRLVLATMRQWEPAATVRLMDEAKKITFNLTVKQLVSIEPGPWTESLRREYVKLIDGFFSIPFPLANLLPFTTYGQALKARKKVAGALREVIKKRMEEKAENGGSIGDDEGKKEKKDMVEELLEAEGGSFSEEEMVDFCLSLLVAGYETTSMLMTLAVKFLTETPAALAELKEEHANIRDMKGKKQPLEWSDYKSMPFTQCVINETLRVGNIISGVFRRANTDIHYKDYTIPKGCKIFASFRAVHLNNEHYENARTFNPWRWQINNKLQNAVGANIFTPFGGGPRLCPGYELARVVVSIFLHHLVTRFSWEETEEDRLVFFPTTRTLKGYPINLRLLSESIC.

The chain crosses the membrane as a helical span at residues 2–22; sequence AAAALLLLAAAAAIVVVAMVL. Cys-446 lines the heme pocket.

It belongs to the cytochrome P450 family. The cofactor is heme. Highly expressed in shoot apex and inflorenscence. Expressed in roots, stems, leaf blades and leaf sheaths.

It is found in the membrane. It functions in the pathway plant hormone biosynthesis; brassinosteroid biosynthesis. In terms of biological role, catalyzes the C23-alpha-hydroxylation step in brassinosteroid biosynthesis. Converts 6-deoxocathasterone (6-deoxoCT) to 6-deoxoteasterone (6-deoxoTE) in the late C6-oxidation pathway and cathasterone (CT) to teasterone (TE) in the early C6-oxidation pathway of brassinolide (BL) biosynthesis. The sequence is that of Cytochrome P450 90A3 from Oryza sativa subsp. japonica (Rice).